The following is a 200-amino-acid chain: V-type proton ATPase subunit E (200 aa).

Belongs to the V-ATPase E subunit family.

In terms of biological role, produces ATP from ADP in the presence of a proton gradient across the membrane. The sequence is that of V-type proton ATPase subunit E from Thermoanaerobacter pseudethanolicus (strain ATCC 33223 / 39E) (Clostridium thermohydrosulfuricum).